Reading from the N-terminus, the 161-residue chain is Nucleotide-binding protein HCH_04620 (161 aa).

Belongs to the YajQ family.

Nucleotide-binding protein. The polypeptide is Nucleotide-binding protein HCH_04620 (Hahella chejuensis (strain KCTC 2396)).